A 404-amino-acid chain; its full sequence is uncharacterized protein (404 aa).

The protein belongs to the lymphocryptovirus BTRF1 family.

This is an uncharacterized protein from Homo sapiens (Human).